The sequence spans 304 residues: Protoheme IX farnesyltransferase 1 (304 aa).

8 helical membrane-spanning segments follow: residues 24–44, 47–67, 99–119, 122–142, 150–170, 176–196, 228–248, and 280–300; these read VVVL…KAPL, FVPW…AGAA, MALG…LAFT, LTAW…TGFL, IVIG…AITG, PLLL…ALCI, LVLF…LVYL, and YSIV…YLPL.

The protein belongs to the UbiA prenyltransferase family. Protoheme IX farnesyltransferase subfamily.

The protein resides in the cell inner membrane. The catalysed reaction is heme b + (2E,6E)-farnesyl diphosphate + H2O = Fe(II)-heme o + diphosphate. It functions in the pathway porphyrin-containing compound metabolism; heme O biosynthesis; heme O from protoheme: step 1/1. Its function is as follows. Converts heme B (protoheme IX) to heme O by substitution of the vinyl group on carbon 2 of heme B porphyrin ring with a hydroxyethyl farnesyl side group. The polypeptide is Protoheme IX farnesyltransferase 1 (Pseudomonas aeruginosa (strain UCBPP-PA14)).